Here is a 348-residue protein sequence, read N- to C-terminus: L-asparaginase 2 (348 aa).

A signal peptide spans Met1–Ala22. One can recognise an Asparaginase/glutaminase domain in the interval Pro24 to Tyr348. Catalysis depends on Thr34, which acts as the O-isoaspartyl threonine intermediate. Residues Ser80 to Gln81 and Thr111 to Asp112 each bind substrate. Cysteines 99 and 127 form a disulfide.

This sequence belongs to the asparaginase 1 family. Homotetramer.

It localises to the periplasm. The catalysed reaction is L-asparagine + H2O = L-aspartate + NH4(+). This chain is L-asparaginase 2 (ansB), found in Escherichia coli (strain K12).